The sequence spans 157 residues: Transcriptional repressor NrdR (157 aa).

The tract at residues 1–21 (MRCPYCGSEDSQVKDSRPAED) is disordered. A zinc finger spans residues 3–34 (CPYCGSEDSQVKDSRPAEDGNAIRRRRICPDC). Residues 11–21 (SQVKDSRPAED) are compositionally biased toward basic and acidic residues. In terms of domain architecture, ATP-cone spans 49–139 (LMIIKKTGRK…VYRDFSHAED (91 aa)).

The protein belongs to the NrdR family. Zn(2+) serves as cofactor.

Negatively regulates transcription of bacterial ribonucleotide reductase nrd genes and operons by binding to NrdR-boxes. In Sinorhizobium medicae (strain WSM419) (Ensifer medicae), this protein is Transcriptional repressor NrdR.